The chain runs to 568 residues: Sphingosine-1-phosphate lyase 1 (568 aa).

Over 1–41 (MPSTDLLTLKAFEPYLEILEVYSTKAKNYVNGHCTKYEPWQ) the chain is Lumenal. The chain crosses the membrane as a helical; Signal-anchor for type III membrane protein span at residues 42–62 (LIAWSVVWTLLIVWGYEFVFQ). The Cytoplasmic segment spans residues 63–568 (PESLWSRFKK…SQMNGSPKPH (506 aa)). Lys-353 is subject to N6-(pyridoxal phosphate)lysine; alternate. N6-acetyllysine; alternate is present on Lys-353. Residues Tyr-356 and Tyr-366 each carry the 3'-nitrotyrosine modification. The residue at position 564 (Ser-564) is a Phosphoserine.

Belongs to the group II decarboxylase family. Sphingosine-1-phosphate lyase subfamily. In terms of assembly, homodimer. Pyridoxal 5'-phosphate is required as a cofactor.

The protein localises to the endoplasmic reticulum membrane. It carries out the reaction sphinganine 1-phosphate = hexadecanal + phosphoethanolamine. The catalysed reaction is sphing-4-enine 1-phosphate = (2E)-hexadecenal + phosphoethanolamine. The protein operates within lipid metabolism; sphingolipid metabolism. Its function is as follows. Cleaves phosphorylated sphingoid bases (PSBs), such as sphingosine-1-phosphate, into fatty aldehydes and phosphoethanolamine. Elevates stress-induced ceramide production and apoptosis. Required for global lipid homeostasis in liver and cholesterol homeostasis in fibroblasts. Involved in the regulation of pro-inflammatory response and neutrophil trafficking. Modulates neuronal autophagy via phosphoethanolamine production which regulates accumulation of aggregate-prone proteins such as APP. Seems to play a role in establishing neuronal contact sites and axonal maintenance. This Pongo abelii (Sumatran orangutan) protein is Sphingosine-1-phosphate lyase 1.